We begin with the raw amino-acid sequence, 666 residues long: 1-deoxy-D-xylulose-5-phosphate synthase (666 aa).

Residues His-103 and 144–146 (AHS) each bind thiamine diphosphate. A Mg(2+)-binding site is contributed by Asp-175. Thiamine diphosphate is bound by residues 176–177 (GA), Asn-204, Tyr-314, and Glu-396. Asn-204 is a binding site for Mg(2+).

This sequence belongs to the transketolase family. DXPS subfamily. As to quaternary structure, homodimer. Requires Mg(2+) as cofactor. Thiamine diphosphate serves as cofactor.

It carries out the reaction D-glyceraldehyde 3-phosphate + pyruvate + H(+) = 1-deoxy-D-xylulose 5-phosphate + CO2. Its pathway is metabolic intermediate biosynthesis; 1-deoxy-D-xylulose 5-phosphate biosynthesis; 1-deoxy-D-xylulose 5-phosphate from D-glyceraldehyde 3-phosphate and pyruvate: step 1/1. Catalyzes the acyloin condensation reaction between C atoms 2 and 3 of pyruvate and glyceraldehyde 3-phosphate to yield 1-deoxy-D-xylulose-5-phosphate (DXP). This chain is 1-deoxy-D-xylulose-5-phosphate synthase, found in Nitrobacter winogradskyi (strain ATCC 25391 / DSM 10237 / CIP 104748 / NCIMB 11846 / Nb-255).